The following is a 1388-amino-acid chain: CRISPR-associated endonuclease Cas9 2 (1388 aa).

Residue Asp-10 is the For RuvC-like nuclease domain of the active site. Mg(2+) is bound by residues Asp-10, Glu-763, and Glu-767. The 158-residue stretch at 771–928 folds into the HNH Cas9-type domain; it reads TNQGKSNSQQ…DKAGFIQRQL (158 aa). His-847 functions as the Proton acceptor for HNH nuclease domain in the catalytic mechanism. Residue His-990 coordinates Mg(2+). Residues 1100-1109 are compositionally biased toward basic and acidic residues; it reads EQNHGLDRGK. Positions 1100 to 1130 are disordered; it reads EQNHGLDRGKPKGLFNANLSSKPKPNSNENL. Residues 1102 to 1388 form a PAM-interacting domain (PI) region; the sequence is NHGLDRGKPK…RIDLAKLGEG (287 aa). The span at 1116–1129 shows a compositional bias: polar residues; it reads ANLSSKPKPNSNEN.

It belongs to the CRISPR-associated protein Cas9 family. Subtype II-A subfamily. As to quaternary structure, monomer. Binds crRNA and tracrRNA. Mg(2+) is required as a cofactor.

Functionally, CRISPR (clustered regularly interspaced short palindromic repeat) is an adaptive immune system that provides protection against mobile genetic elements (viruses, transposable elements and conjugative plasmids). CRISPR clusters contain spacers, sequences complementary to antecedent mobile elements, and target invading nucleic acids. CRISPR clusters are transcribed and processed into CRISPR RNA (crRNA). In type II CRISPR systems correct processing of pre-crRNA requires a trans-encoded small RNA (tracrRNA), endogenous ribonuclease 3 (rnc) and this protein. The tracrRNA serves as a guide for ribonuclease 3-aided processing of pre-crRNA. Subsequently Cas9/crRNA/tracrRNA endonucleolytically cleaves linear or circular dsDNA target complementary to the spacer yielding blunt ends; Cas9 is inactive in the absence of the 2 guide RNAs (gRNA). Cas9 recognizes a 3'-G-rich protospacer adjacent motif (PAM, GGG in this organism) in the CRISPR repeat sequences to help distinguish self versus nonself, as targets within the bacterial CRISPR locus do not have PAMs. PAM recognition is also required for catalytic activity. Complements the gRNA coprocessing defect in a cas9 deletion in S.pyogenes strain 370, and cuts target DNA in Cas9:gRNAs mixing experiments with S.mutans strain UA159. This Streptococcus thermophilus (strain ATCC BAA-491 / LMD-9) protein is CRISPR-associated endonuclease Cas9 2.